The sequence spans 530 residues: Alpha-(1,3)-fucosyltransferase 4 (530 aa).

Disordered regions lie at residues 1 to 48 (MRRL…RAVP) and 66 to 112 (HLGG…STPA). Residues 1–147 (MRRLWGAARK…GGRRGWRRGR (147 aa)) are Cytoplasmic-facing. Basic and acidic residues predominate over residues 88–106 (ASGERQRRLEPQLQHESRC). The chain crosses the membrane as a helical; Signal-anchor for type II membrane protein span at residues 148–172 (GLPWTVCVLAAAGLTCTALITYACW). Residues 173 to 530 (GQLPPLPWAS…IRNLASWFER (358 aa)) lie on the Lumenal side of the membrane. 2 N-linked (GlcNAc...) asparagine glycosylation sites follow: Asn-216 and Asn-315.

It belongs to the glycosyltransferase 10 family. As to expression, expressed at low levels in bone marrow-derived mesenchymal stem cells. In terms of tissue distribution, expressed in cord blood immature promyelocytes and in peripheral blood myeloid and lymphoid cell populations.

It is found in the golgi apparatus. The protein localises to the golgi stack membrane. It catalyses the reaction a beta-D-galactosyl-(1-&gt;4)-N-acetyl-beta-D-glucosaminyl derivative + GDP-beta-L-fucose = a beta-D-galactosyl-(1-&gt;4)-[alpha-L-fucosyl-(1-&gt;3)]-N-acetyl-beta-D-glucosaminyl derivative + GDP + H(+). The catalysed reaction is an N-acetyl-alpha-neuraminyl-(2-&gt;3)-beta-D-galactosyl-(1-&gt;4)-N-acetyl-beta-D-glucosaminyl derivative + GDP-beta-L-fucose = an alpha-Neu5Ac-(2-&gt;3)-beta-D-Gal-(1-&gt;4)-[alpha-L-Fuc-(1-&gt;3)]-beta-D-GlcNAc derivative + GDP + H(+). The enzyme catalyses an alpha-Neu5Ac-(2-&gt;3)-beta-D-Gal-(1-&gt;4)-beta-D-GlcNAc-(1-&gt;3)-beta-D-Gal-(1-&gt;4)-beta-D-GlcNAc derivative + GDP-beta-L-fucose = an alpha-Neu5Ac-(2-&gt;3)-beta-D-Gal-(1-&gt;4)-beta-D-GlcNAc-(1-&gt;3)-beta-D-Gal-(1-&gt;4)-[alpha-L-Fuc-(1-&gt;3)]-beta-D-GlcNAc derivative + GDP + H(+). It carries out the reaction an alpha-Neu5Ac-(2-&gt;3)-beta-D-Gal-(1-&gt;4)-beta-D-GlcNAc6S derivative + GDP-beta-L-fucose = an alpha-Neu5Ac-(2-&gt;3)-beta-D-Gal-(1-&gt;4)-[alpha-L-Fuc-(1-&gt;3)]-beta-D-GlcNAc6S derivative + GDP + H(+). It participates in protein modification; protein glycosylation. In terms of biological role, catalyzes alpha(1-&gt;3) linkage of fucosyl moiety transferred from GDP-beta-L-fucose to N-acetyl glucosamine (GlcNAc) within type 2 lactosamine (LacNAc, Gal-beta(1-&gt;4)GlcNAc) glycan attached to N- or O-linked glycoproteins. Robustly fucosylates nonsialylated distal LacNAc unit of the polylactosamine chain to form Lewis X antigen (CD15), a glycan determinant known to mediate important cellular functions in development and immunity. Fucosylates with lower efficiency sialylated LacNAc acceptors to form sialyl Lewis X and 6-sulfo sialyl Lewis X determinants that serve as recognition epitopes for C-type lectins. Together with FUT7 contributes to SELE, SELL and SELP selectin ligand biosynthesis and selectin-dependent lymphocyte homing, leukocyte migration and blood leukocyte homeostasis. In a cell type specific manner, may also fucosylate the internal LacNAc unit of the polylactosamine chain to form VIM-2 antigen that serves as recognition epitope for SELE. Its function is as follows. Does not generate Lewis X antigens. The sequence is that of Alpha-(1,3)-fucosyltransferase 4 from Homo sapiens (Human).